We begin with the raw amino-acid sequence, 299 residues long: HTH-type transcriptional regulator ArgP (299 aa).

Positions 4–60 (PDYRTLQALDAVIRERGFERAAQKLCITQSAVSQRIKQLENMFGQPLLVRTVPPRPT) constitute an HTH lysR-type domain. The segment at residues 21-40 (FERAAQKLCITQSAVSQRIK) is a DNA-binding region (H-T-H motif).

It belongs to the LysR transcriptional regulatory family. In terms of assembly, homodimer.

Functionally, controls the transcription of genes involved in arginine and lysine metabolism. In Erwinia tasmaniensis (strain DSM 17950 / CFBP 7177 / CIP 109463 / NCPPB 4357 / Et1/99), this protein is HTH-type transcriptional regulator ArgP.